Reading from the N-terminus, the 147-residue chain is Small ribosomal subunit protein uS5 (147 aa).

The S5 DRBM domain occupies Phe9 to Val72.

This sequence belongs to the universal ribosomal protein uS5 family. As to quaternary structure, part of the 30S ribosomal subunit. Contacts proteins S4 and S8.

With S4 and S12 plays an important role in translational accuracy. Functionally, located at the back of the 30S subunit body where it stabilizes the conformation of the head with respect to the body. The polypeptide is Small ribosomal subunit protein uS5 (Campylobacter curvus (strain 525.92)).